The chain runs to 291 residues: MTNKITERITGHTELIGLIATPIRHSLSPTMHNEAFAKLGLDYVYLAFEVGDKELKDVVQGFRAMNLRGWNVSMPNKTNIHKYLDKLSPAAELVGAVNTVVNDDGVLTGHITDGTGYMRALKEAGHDIIGKKMTICGAGGAATAICIQAALDGVKEISIFNRKDDFYANAEKTVEKINTKTNCKAQLFDMEDHEQLRKEIAESVIFTNATGVGMKPFEGETLLPSADMLRPELIVSDVVYKPTKTRLLEIAEEQGCQTLNGLGMMLWQGAKAFEIWTHKEMPVDYIKEILF.

Shikimate-binding positions include 26-28 (SLS) and Ser73. Catalysis depends on Lys77, which acts as the Proton acceptor. Shikimate contacts are provided by Asn98 and Asp113. Residues 137-141 (GAGGA) and Val238 each bind NADP(+). Position 240 (Tyr240) interacts with shikimate. Residue Gly261 participates in NADP(+) binding.

Belongs to the shikimate dehydrogenase family. As to quaternary structure, homodimer.

The enzyme catalyses shikimate + NADP(+) = 3-dehydroshikimate + NADPH + H(+). Its pathway is metabolic intermediate biosynthesis; chorismate biosynthesis; chorismate from D-erythrose 4-phosphate and phosphoenolpyruvate: step 4/7. Its function is as follows. Involved in the biosynthesis of the chorismate, which leads to the biosynthesis of aromatic amino acids. Catalyzes the reversible NADPH linked reduction of 3-dehydroshikimate (DHSA) to yield shikimate (SA). The protein is Shikimate dehydrogenase (NADP(+)) of Listeria innocua serovar 6a (strain ATCC BAA-680 / CLIP 11262).